The following is a 519-amino-acid chain: Membrane-bound glycerophospholipid O-acyltransferase 2 (519 aa).

6 helical membrane passes run 22–42 (PIDQ…AVWF), 61–81 (TLLG…HFLV), 88–108 (CIMI…FALG), 184–204 (FMGI…FIEG), 236–256 (LLVC…LPVE), and 288–305 (YFAW…GFGF). Active-site residues include Asn-341 and His-372. 3 helical membrane passes run 365 to 385 (FFLS…FLTG), 415 to 435 (IITW…FVLL), and 443 to 463 (FYRS…LLLP).

Belongs to the membrane-bound acyltransferase family.

Its subcellular location is the endoplasmic reticulum membrane. It carries out the reaction a 1-acyl-sn-glycero-3-phosphocholine + an acyl-CoA = a 1,2-diacyl-sn-glycero-3-phosphocholine + CoA. The enzyme catalyses a 1-acyl-sn-glycero-3-phosphoethanolamine + an acyl-CoA = a 1,2-diacyl-sn-glycero-3-phosphoethanolamine + CoA. It catalyses the reaction a 1-acyl-sn-glycero-3-phosphate + an acyl-CoA = a 1,2-diacyl-sn-glycero-3-phosphate + CoA. The catalysed reaction is (9Z)-hexadecenoyl-CoA + 1-hexadecanoyl-sn-glycero-3-phosphocholine = 1-hexadecanoyl-2-(9Z-hexadecenoyl)-sn-glycero-3-phosphocholine + CoA. It carries out the reaction 1-hexadecanoyl-sn-glycero-3-phosphoethanolamine + (9Z)-octadecenoyl-CoA = 1-hexadecanoyl-2-(9Z-octadecenoyl)-sn-glycero-3-phosphoethanolamine + CoA. The enzyme catalyses 1-hexadecanoyl-sn-glycero-3-phosphoethanolamine + (9Z)-hexadecenoyl-CoA = 1-hexadecanoyl-2-(9Z)-hexadecenoyl-sn-glycero-3-phosphoethanolamine + CoA. It catalyses the reaction 1-(9Z-octadecenoyl)-sn-glycero-3-phospho-L-serine + hexadecanoyl-CoA = 1-(9Z)-octadecenoyl-2-hexadecanoyl-sn-glycero-3-phosphoserine + CoA. The catalysed reaction is (9Z,12Z)-octadecadienoyl-CoA + 1-hexadecanoyl-sn-glycero-3-phosphocholine = 1-hexadecanoyl-2-(9Z,12Z-octadecadienoyl)-sn-glycero-3-phosphocholine + CoA. It carries out the reaction 1-hexadecanoyl-sn-glycero-3-phosphocholine + (9Z)-octadecenoyl-CoA = 1-hexadecanoyl-2-(9Z-octadecenoyl)-sn-glycero-3-phosphocholine + CoA. The enzyme catalyses 1-hexadecanoyl-sn-glycero-3-phosphate + (9Z)-hexadecenoyl-CoA = 1-hexadecanoyl-2-[(9Z)-hexadec-9-enoyl]-sn-glycero-3-phosphate + CoA. It catalyses the reaction 1-hexadecanoyl-sn-glycero-3-phosphate + (9Z)-octadecenoyl-CoA = 1-hexadecanoyl-2-(9Z-octadecenoyl)-sn-glycero-3-phosphate + CoA. The catalysed reaction is a 1-O-(1Z-alkenyl)-sn-glycero-3-phosphocholine + (9Z)-octadecenoyl-CoA = 1-O-(1Z)-alkenyl-2-(9Z)-octadecenoyl-sn-glycero-3-phosphocholine + CoA. It carries out the reaction a 1-O-(1Z-alkenyl)-sn-glycero-3-phosphoethanolamine + (9Z)-octadecenoyl-CoA = 1-O-(1Z)-alkenyl-2-(9Z)-octadecenoyl-sn-glycero-3-phosphoethanolamine + CoA. The enzyme catalyses 1-octadecanoyl-sn-glycero-3-phosphoethanolamine + (9Z)-octadecenoyl-CoA = 1-octadecanoyl-2-(9Z-octadecenoyl)-sn-glycero-3-phosphoethanolamine + CoA. It catalyses the reaction 1-octadecanoyl-sn-glycero-3-phosphocholine + (9Z)-octadecenoyl-CoA = 1-octadecanoyl-2-(9Z-octadecenoyl)-sn-glycero-3-phosphocholine + CoA. The catalysed reaction is 1-(9Z-octadecenoyl)-sn-glycero-3-phosphoethanolamine + (9Z)-octadecenoyl-CoA = 1,2-di-(9Z-octadecenoyl)-sn-glycero-3-phosphoethanolamine + CoA. Its pathway is lipid metabolism; phospholipid metabolism. Its activity is regulated as follows. Partially inhibited by thimerosal. In terms of biological role, acyltransferase which catalyzes the transfer of an acyl group from an acyl-CoA to a lysophospholipid leading to the production of a phospholipid and participates in the reacylation step of the phospholipid remodeling pathway also known as the Lands cycle. May catalyze preferentially the acylation of lysophosphatidylethanolamine (1-acyl-sn-glycero-3-phosphoethanolamine or LPE) and lysophosphatidic acid (LPA) and to a lesser extend lysophosphatidylcholine (LPC) and lysophosphatidylserine (LPS). Prefers oleoyl-CoA as the acyl donor. May be involved in chondrocyte differentiation. The sequence is that of Membrane-bound glycerophospholipid O-acyltransferase 2 from Rattus norvegicus (Rat).